The chain runs to 2264 residues: RNA1 polyprotein (2264 aa).

The Cytoplasmic segment spans residues methionine 566–glycine 1156. The SF3 helicase domain occupies threonine 750 to proline 916. Residue glycine 780–serine 787 participates in ATP binding. The helical transmembrane segment at cysteine 1157–tryptophan 1177 threads the bilayer. Topologically, residues lysine 1178–lysine 1203 are lumenal. A Peptidase C3 domain is found at alanine 1227–leucine 1436. Catalysis depends on for picornain 3C-like protease activity residues histidine 1270, glutamate 1308, and cysteine 1400. The RdRp catalytic domain maps to asparagine 1713–phenylalanine 1841.

Belongs to the nepoviruses RNA1 polyprotein family. Specific enzymatic cleavages by picornain 3C-like protease in vivo yield mature proteins. Picornain 3C-like protease is autocatalytically processed. Post-translationally, VPg is uridylylated by the polymerase and is covalently linked to the 5'-end of genomic RNA. This uridylylated form acts as a nucleotide-peptide primer for the polymerase.

It localises to the host endoplasmic reticulum lumen. Its subcellular location is the host endoplasmic reticulum membrane. It catalyses the reaction RNA(n) + a ribonucleoside 5'-triphosphate = RNA(n+1) + diphosphate. Functionally, picornain 3C-like protease is a thiol protease that cleaves the P1 and P2 polyproteins. This Beet ringspot virus (BRSV) protein is RNA1 polyprotein.